Here is a 219-residue protein sequence, read N- to C-terminus: Adenylate kinase (219 aa).

Position 10–15 (10–15 (GAGKGT)) interacts with ATP. The segment at 30-59 (STGDMLRAAVKAGTPLGQQAKKIMDEGGLV) is NMP. AMP contacts are provided by residues threonine 31, arginine 36, 57–59 (GLV), 85–88 (GFPR), and glutamine 92. The segment at 122–159 (GRRVHPGSGRVYHVTHNPPRQEGKDDVTGEDLVQREDD) is LID. Residues arginine 123 and 132 to 133 (VY) each bind ATP. Residues 128–150 (GSGRVYHVTHNPPRQEGKDDVTG) are disordered. Positions 140-150 (PRQEGKDDVTG) are enriched in basic and acidic residues. AMP contacts are provided by arginine 156 and arginine 167. Position 203 (arginine 203) interacts with ATP.

Belongs to the adenylate kinase family. Monomer.

The protein resides in the cytoplasm. The enzyme catalyses AMP + ATP = 2 ADP. Its pathway is purine metabolism; AMP biosynthesis via salvage pathway; AMP from ADP: step 1/1. Catalyzes the reversible transfer of the terminal phosphate group between ATP and AMP. Plays an important role in cellular energy homeostasis and in adenine nucleotide metabolism. The sequence is that of Adenylate kinase from Halorhodospira halophila (strain DSM 244 / SL1) (Ectothiorhodospira halophila (strain DSM 244 / SL1)).